A 123-amino-acid polypeptide reads, in one-letter code: Small ribosomal subunit protein uS12c (123 aa).

The interval 103-123 (AAGVKNRKQSRSKYGAKKPKE) is disordered. A compositionally biased stretch (basic residues) spans 107–123 (KNRKQSRSKYGAKKPKE).

The protein belongs to the universal ribosomal protein uS12 family. In terms of assembly, part of the 30S ribosomal subunit.

It is found in the plastid. The protein resides in the chloroplast. With S4 and S5 plays an important role in translational accuracy. Located at the interface of the 30S and 50S subunits. The polypeptide is Small ribosomal subunit protein uS12c (rps12) (Guillardia theta (Cryptophyte)).